Consider the following 319-residue polypeptide: Protein SODIUM POTASSIUM ROOT DEFECTIVE 1 (319 aa).

Residues 1–13 (MLCASQASTTTLC) are compositionally biased toward polar residues. 2 disordered regions span residues 1–113 (MLCA…TPQG) and 191–248 (SPDN…NSSS). A compositionally biased stretch (low complexity) spans 14–27 (STMDQTSQPSSSSS). Basic and acidic residues predominate over residues 36–49 (AIDRHNPIIRDGRR). The span at 58–67 (LNPSSSSSST) shows a compositional bias: low complexity. Polar residues-rich tracts occupy residues 104–113 (SCFSSDTPQG) and 200–210 (TKASPTASLSS). Positions 224–242 (SPPPPPPPSPPQSSPPSPP) are enriched in pro residues. Residues 249-315 (DQVVVLRVSL…KVKNAQFWPE (67 aa)) enclose the HMA domain. C260 and C263 together coordinate Zn(2+).

Interacts with FT, but not with TSF (TWIN SISTER OF FT). In terms of tissue distribution, expressed in vascular tissues of cotyledons, rosette leaves and roots in developing seedlings before and during the floral transition. Expressed specifically in the phloem companion cells. Not detected in embryos or seeds. Not detected in the vegetative shoot apex.

Its subcellular location is the cytoplasm. The protein resides in the nucleus. It is found in the endoplasmic reticulum. Its function is as follows. Required for root meristem maintenance after germination. Involved in phloem translocation, starch accumulation and flowering. Promotes flowering in the photoperiod pathway. Regulates long-distance movement of FT from leaves to the shoot apex through the phloem stream. This is Protein SODIUM POTASSIUM ROOT DEFECTIVE 1 from Arabidopsis thaliana (Mouse-ear cress).